A 373-amino-acid polypeptide reads, in one-letter code: MTTEANSTAEEGYSVQRDFWRQAAKSDGFDLENISLPPGTNGIVMGLIPYDCQRARHYPFPVLVKLYAKFGLHRYNMLKGTSFQLATLMKFNMLPNYISSFYMTLLAHDPDPAAGSSQKTFQVRVDEQQFGSLDINCSIARPKHEGDLLEVSTETPFMPHFHGGALGDGIFKVELPDCLSDTALNELAGAVLRGELPEHVFDDALYARAGGIFQGELPDWPSDDVLNDGKRFYMVKESEWQATDWISMYLELVITTTDKSISIKPEVLSKLEIVKVAIETATKDEEPSNERLKAYRAHVYITFKGLAEPRAHERVFEIGEHVERQAIVRRVMGHRGDLTLKGKLCGGQYIKKRSLALKSGKKSQKCKKQALVG.

Threonine 2 is subject to N-acetylthreonine.

Belongs to the UPF0725 (EMB2204) family.

In Arabidopsis thaliana (Mouse-ear cress), this protein is UPF0725 protein At1g23950.